The chain runs to 452 residues: Pup--protein ligase (452 aa).

Residue glutamate 9 coordinates Mg(2+). Residue arginine 53 coordinates ATP. A Mg(2+)-binding site is contributed by tyrosine 55. Aspartate 57 acts as the Proton acceptor in catalysis. Glutamate 63 contributes to the Mg(2+) binding site. Positions 66 and 419 each coordinate ATP.

It belongs to the Pup ligase/Pup deamidase family. Pup-conjugating enzyme subfamily.

It carries out the reaction ATP + [prokaryotic ubiquitin-like protein]-L-glutamate + [protein]-L-lysine = ADP + phosphate + N(6)-([prokaryotic ubiquitin-like protein]-gamma-L-glutamyl)-[protein]-L-lysine.. It participates in protein degradation; proteasomal Pup-dependent pathway. Its pathway is protein modification; protein pupylation. Its function is as follows. Catalyzes the covalent attachment of the prokaryotic ubiquitin-like protein modifier Pup to the proteasomal substrate proteins, thereby targeting them for proteasomal degradation. This tagging system is termed pupylation. The ligation reaction involves the side-chain carboxylate of the C-terminal glutamate of Pup and the side-chain amino group of a substrate lysine. This chain is Pup--protein ligase, found in Mycobacterium sp. (strain JLS).